The primary structure comprises 951 residues: Protein translocase subunit SecA (951 aa).

ATP is bound by residues Gln-90, 108-112 (GEGKT), and Asp-509.

This sequence belongs to the SecA family. As to quaternary structure, monomer and homodimer. Part of the essential Sec protein translocation apparatus which comprises SecA, SecYEG and auxiliary proteins SecDF. Other proteins may also be involved.

Its subcellular location is the cell inner membrane. The protein localises to the cellular thylakoid membrane. The protein resides in the cytoplasm. It carries out the reaction ATP + H2O + cellular proteinSide 1 = ADP + phosphate + cellular proteinSide 2.. Its function is as follows. Part of the Sec protein translocase complex. Interacts with the SecYEG preprotein conducting channel. Has a central role in coupling the hydrolysis of ATP to the transfer of proteins into and across the cell membrane, serving as an ATP-driven molecular motor driving the stepwise translocation of polypeptide chains across the membrane. In terms of biological role, probably participates in protein translocation into and across both the cytoplasmic and thylakoid membranes in cyanobacterial cells. The sequence is that of Protein translocase subunit SecA from Prochlorococcus marinus (strain MIT 9303).